Reading from the N-terminus, the 264-residue chain is Proteasome subunit beta type-4 (264 aa).

M1 is subject to N-acetylmethionine. A propeptide spanning residues 1-45 (MEAFLGSRSGLWAGGPAPGQFYRIPSTPDSFMDPASALYRGPITR) is cleaved from the precursor. S26 carries the post-translational modification Phosphoserine. Residue Y102 is modified to Phosphotyrosine.

It belongs to the peptidase T1B family. As to quaternary structure, the 26S proteasome consists of a 20S proteasome core and two 19S regulatory subunits. The 20S proteasome core is a barrel-shaped complex made of 28 subunits that are arranged in four stacked rings. The two outer rings are each formed by seven alpha subunits, and the two inner rings are formed by seven beta subunits. The proteolytic activity is exerted by three beta-subunits PSMB5, PSMB6 and PSMB7. Forms a ternary complex with SMAD1 and OAZ1 before PSMB4 is incorporated into the 20S proteasome. Interacts with PRPF19. In terms of assembly, (Microbial infection) Interacts with HTLV-1 Tax protein. (Microbial infection) Interacts with HIV-1 Nef and Tat proteins.

Its subcellular location is the cytoplasm. It is found in the nucleus. Its function is as follows. Non-catalytic component of the 20S core proteasome complex involved in the proteolytic degradation of most intracellular proteins. This complex plays numerous essential roles within the cell by associating with different regulatory particles. Associated with two 19S regulatory particles, forms the 26S proteasome and thus participates in the ATP-dependent degradation of ubiquitinated proteins. The 26S proteasome plays a key role in the maintenance of protein homeostasis by removing misfolded or damaged proteins that could impair cellular functions, and by removing proteins whose functions are no longer required. Associated with the PA200 or PA28, the 20S proteasome mediates ubiquitin-independent protein degradation. This type of proteolysis is required in several pathways including spermatogenesis (20S-PA200 complex) or generation of a subset of MHC class I-presented antigenic peptides (20S-PA28 complex). SMAD1/OAZ1/PSMB4 complex mediates the degradation of the CREBBP/EP300 repressor SNIP1. This is Proteasome subunit beta type-4 from Homo sapiens (Human).